The primary structure comprises 635 residues: Threonine--tRNA ligase (635 aa).

Positions 1–61 (MTVVRLPDGT…EIDSDLVLIT (61 aa)) constitute a TGS domain. A catalytic region spans residues 242-533 (DHRKLGKQLD…LIEHHAGALP (292 aa)). C333, H384, and H510 together coordinate Zn(2+).

It belongs to the class-II aminoacyl-tRNA synthetase family. As to quaternary structure, homodimer. It depends on Zn(2+) as a cofactor.

The protein resides in the cytoplasm. It carries out the reaction tRNA(Thr) + L-threonine + ATP = L-threonyl-tRNA(Thr) + AMP + diphosphate + H(+). Catalyzes the attachment of threonine to tRNA(Thr) in a two-step reaction: L-threonine is first activated by ATP to form Thr-AMP and then transferred to the acceptor end of tRNA(Thr). Also edits incorrectly charged L-seryl-tRNA(Thr). The sequence is that of Threonine--tRNA ligase from Nitrosomonas eutropha (strain DSM 101675 / C91 / Nm57).